The following is a 571-amino-acid chain: PR domain zinc finger protein 14 (571 aa).

Serine 79 carries the phosphoserine modification. The interval 129–191 (LGHQIIGGDN…PKPSNQEGKS (63 aa)) is disordered. The segment covering 165–176 (RTSQLLPCSPSK) has biased composition (polar residues). Positions 194-384 (RFQFTEEDLH…DIPVSLQVTE (191 aa)) are interaction with CBFA2T2. Residues 251-367 (EGLCLMQTVF…QNQELLVWYG (117 aa)) form the SET domain. The C2H2-type 1; atypical zinc-finger motif lies at 400 to 424 (YRCERCGKVFTYKYYRDKHLKYTPC). 5 consecutive C2H2-type zinc fingers follow at residues 432–455 (FPCSLCKRSFEKRDRLRIHILHVH), 461–483 (HKCSTCGKCFSQSSSLNKHMRVH), 489–511 (YQCVYCTKRFTASSILRTHIRQH), 517–540 (FKCKYCGKSFASHAAHDSHVRRSH), and 546–568 (CSCSICGKIFSDQETFYSHMKFH).

It belongs to the class V-like SAM-binding methyltransferase superfamily. As to quaternary structure, interacts with CBFA2T2. As to expression, expressed in embryonic stem cells. Tends to be overexpressed in breast cancer (at protein level).

It localises to the nucleus. Transcription factor that has both positive and negative roles on transcription. Required for the maintenance of embryonic stem cell identity and the reacquisition of pluripotency in somatic cells. May play an essential role in germ cell development at 2 levels: the reacquisition of potential pluripotency, including SOX2 up-regulation, and successful epigenetic reprogramming, characterized by EHMT1 repression. Its association with CBFA2T2 is required for the functions in pluripotency and germ cell formation. Directly up-regulates the expression of pluripotency gene POU5F1 through its proximal enhancer. Binds to the DNA consensus sequence 5'-GGTC[TC]CTAA-3'. The polypeptide is PR domain zinc finger protein 14 (PRDM14) (Homo sapiens (Human)).